The primary structure comprises 516 residues: 4-hydroxybenzoate brominase (decarboxylating) (516 aa).

FAD is bound by residues Ser13, Glu32, Val40, Phe41, His51, Val102, and Gln365.

Belongs to the FMO family. The cofactor is FAD.

The catalysed reaction is 2 bromide + 4-hydroxybenzoate + 2 NADPH + 2 O2 + 5 H(+) = 2,4-dibromophenol + CO2 + 2 NADP(+) + 4 H2O. It carries out the reaction bromide + 4-hydroxybenzoate + NADPH + O2 + 2 H(+) = 3-bromo-4-hydroxybenzoate + NADP(+) + 2 H2O. The enzyme catalyses 3-bromo-4-hydroxybenzoate + bromide + NADPH + O2 + 3 H(+) = 2,4-dibromophenol + CO2 + NADP(+) + 2 H2O. It catalyses the reaction 3,4-dihydroxybenzoate + 2 bromide + 2 NADPH + 2 O2 + 5 H(+) = 3,5-dibromobenzene-1,2-diol + CO2 + 2 NADP(+) + 4 H2O. The catalysed reaction is 3,4-dihydroxybenzoate + bromide + NADPH + O2 + 2 H(+) = 3-bromo-4,5-dihydroxybenzoate + NADP(+) + 2 H2O. It carries out the reaction 3-bromo-4,5-dihydroxybenzoate + bromide + NADPH + O2 + 3 H(+) = 3,5-dibromobenzene-1,2-diol + CO2 + NADP(+) + 2 H2O. In terms of biological role, brominase involved in the biosynthesis of polybrominated aromatic organic compounds. Catalyzes the bromination of 4-hydroxybenzoate (4-HBA) to 3-bromo-4-hydroxybenzoate, followed by bromination and decarboxylation of 3-bromo-4-hydroxybenzoate to 2,4-dibromophenol. Can also use 3,4-dihydroxybenzoate, with lower efficiency, forming 3-bromo-4,5-dihydroxybenzoate and 3,5-dibromobenzene-1,2-diol. The chain is 4-hydroxybenzoate brominase (decarboxylating) from Marinomonas mediterranea (strain ATCC 700492 / JCM 21426 / NBRC 103028 / MMB-1).